The primary structure comprises 427 residues: Adenylosuccinate synthetase (427 aa).

Residues 12 to 18 (GDEGKGK) and 40 to 42 (GHT) contribute to the GTP site. Residue aspartate 13 is the Proton acceptor of the active site. Positions 13 and 40 each coordinate Mg(2+). Residues 13-16 (DEGK), 38-41 (NAGH), threonine 128, arginine 142, glutamine 223, threonine 238, and arginine 302 each bind IMP. Histidine 41 serves as the catalytic Proton donor. Position 298–304 (298–304 (VTTGRDR)) interacts with substrate. GTP is bound by residues arginine 304, 330 to 332 (KLD), and 412 to 414 (GVG).

It belongs to the adenylosuccinate synthetase family. In terms of assembly, homodimer. The cofactor is Mg(2+).

The protein localises to the cytoplasm. The catalysed reaction is IMP + L-aspartate + GTP = N(6)-(1,2-dicarboxyethyl)-AMP + GDP + phosphate + 2 H(+). The protein operates within purine metabolism; AMP biosynthesis via de novo pathway; AMP from IMP: step 1/2. Its function is as follows. Plays an important role in the de novo pathway of purine nucleotide biosynthesis. Catalyzes the first committed step in the biosynthesis of AMP from IMP. In Streptomyces coelicolor (strain ATCC BAA-471 / A3(2) / M145), this protein is Adenylosuccinate synthetase.